The chain runs to 1469 residues: snRNA-activating protein complex subunit 4 (1469 aa).

The interval 16–82 is disordered; the sequence is ELERILDPGS…DPKDKTLPED (67 aa). Over residues 24 to 36 the composition is skewed to low complexity; that stretch reads GSSGSHVEISESS. The segment covering 37–53 has biased composition (acidic residues); it reads LESDSEADSLPSEDLDP. Serine 68 carries the post-translational modification Phosphoserine. An SNAPC5-binding region spans residues 84–133; it reads ETCLQLNMVYQEVIQEKLAEANLLLAQNREQQEELMRDLAGSKGTKVKDG. The Myb-like 1 domain occupies 250 to 288; that stretch reads EEALLGNRLDSHDWEKISNINFEGSRSAEEIRKFWQNSE. In terms of domain architecture, HTH myb-type 1 spans 289–343; the sequence is HPSINKQEWSREEEERLQAIAAAHGHLEWQKIAEELGTSRSAFQCLQKFQQHNKA. A DNA-binding region (H-T-H motif) is located at residues 317–341; that stretch reads WQKIAEELGTSRSAFQCLQKFQQHN. The 52-residue stretch at 344-395 folds into the Myb-like 2 domain; that stretch reads LKRKEWTEEEDRMLTQLVQEMRVGSHIPYRRIVYYMEGRDSMQLIYRWTKSL. HTH myb-type domains are found at residues 396-451 and 452-503; these read DPGL…HFSL and KKGR…GKKQ. DNA-binding regions (H-T-H motif) lie at residues 424-447 and 476-499; these read WFKIREEVPGRSDAQCRDRYLRRL and WAKIASELPHRSGSQCLSKWKIMM. Disordered regions lie at residues 501–558, 577–661, 685–710, 834–894, 932–981, 1001–1051, 1121–1167, and 1184–1266; these read KKQG…GDRA, QSTS…QALE, RSCTQKEQLRQPPLPTSSPGVSSGDS, ASSS…KTVS, PLPH…DKRL, PAAS…PSPT, AAQG…PAEA, and IPEP…GPEK. Over residues 503 to 516 the composition is skewed to basic residues; it reads QGLRRRRRRARHSV. Residues 519–541 are compositionally biased toward low complexity; that stretch reads SSTSSSGSSSGSSGGSSSSSSSS. At serine 599 the chain carries Phosphoserine. Residues 602 to 618 are compositionally biased toward polar residues; it reads KGSSASQGGSKEASTTA. Serine 626 bears the Phosphoserine mark. Positions 932-944 are enriched in pro residues; the sequence is PLPHTPHGRPAPG. Residues 951 to 968 show a composition bias toward low complexity; the sequence is PLSGPGAPAAAKPGTSGS. A compositionally biased stretch (polar residues) spans 1014 to 1029; that stretch reads ISVSCPESGLGQSQAP. The span at 1039-1051 shows a compositional bias: pro residues; that stretch reads EAPPFLPAAPSPT. The residue at position 1157 (threonine 1157) is a Phosphothreonine. Basic and acidic residues predominate over residues 1184-1195; sequence IPEPRTSSHADP. At serine 1224 the chain carries Phosphoserine. The SNAPC2-binding stretch occupies residues 1281 to 1393; it reads ATQQWLGGQR…QGVRTTLSVP (113 aa). 3 positions are modified to phosphoserine: serine 1398, serine 1400, and serine 1440. The disordered stretch occupies residues 1430-1449; that stretch reads APDSGKCSASSCLDTSNDPD. A compositionally biased stretch (polar residues) spans 1436–1445; it reads CSASSCLDTS.

As to quaternary structure, part of the SNAPc complex composed of 5 subunits: SNAPC1, SNAPC2, SNAPC3, SNAPC4 and SNAPC5. SNAPC4 interacts with SNAPC1, SNAPC2, SNAPC5, BRF2 and TBP.

It localises to the nucleus. Its function is as follows. Part of the SNAPc complex required for the transcription of both RNA polymerase II and III small-nuclear RNA genes. Binds to the proximal sequence element (PSE), a non-TATA-box basal promoter element common to these 2 types of genes. Recruits TBP and BRF2 to the U6 snRNA TATA box. The chain is snRNA-activating protein complex subunit 4 from Homo sapiens (Human).